The sequence spans 224 residues: 7-cyano-7-deazaguanine synthase (224 aa).

12-22 is an ATP binding site; sequence LSGGLDSSTVT. Residues cysteine 193, cysteine 201, cysteine 204, and cysteine 207 each contribute to the Zn(2+) site.

The protein belongs to the QueC family. It depends on Zn(2+) as a cofactor.

It catalyses the reaction 7-carboxy-7-deazaguanine + NH4(+) + ATP = 7-cyano-7-deazaguanine + ADP + phosphate + H2O + H(+). It functions in the pathway purine metabolism; 7-cyano-7-deazaguanine biosynthesis. Catalyzes the ATP-dependent conversion of 7-carboxy-7-deazaguanine (CDG) to 7-cyano-7-deazaguanine (preQ(0)). The protein is 7-cyano-7-deazaguanine synthase of Prochlorococcus marinus (strain AS9601).